Here is a 559-residue protein sequence, read N- to C-terminus: Fanconi-associated nuclease 1 homolog (559 aa).

Residues glutamate 386, aspartate 507, glutamate 522, and valine 523 each coordinate Mn(2+). The 113-residue stretch at 443-555 (DGSYRDAIRC…MPVAVCYVRW (113 aa)) folds into the VRR-NUC domain.

Belongs to the FAN1 family. Requires Mn(2+) as cofactor. The cofactor is Mg(2+).

The catalysed reaction is Hydrolytically removes 5'-nucleotides successively from the 3'-hydroxy termini of 3'-hydroxy-terminated oligonucleotides.. In terms of biological role, nuclease required for the repair of DNA interstrand cross-links (ICL). Acts as a 5'-3' exonuclease that anchors at a cut end of DNA and cleaves DNA successively at every third nucleotide, allowing to excise an ICL from one strand through flanking incisions. Also has endonuclease activity toward 5'-flaps. The polypeptide is Fanconi-associated nuclease 1 homolog (Pseudomonas aeruginosa (strain ATCC 15692 / DSM 22644 / CIP 104116 / JCM 14847 / LMG 12228 / 1C / PRS 101 / PAO1)).